The primary structure comprises 345 residues: Methionine import ATP-binding protein MetN (345 aa).

The ABC transporter domain occupies 2 to 241 (IKLKNISKVF…PKTLLAQEFI (240 aa)). An ATP-binding site is contributed by 38–45 (GASGAGKS).

Belongs to the ABC transporter superfamily. Methionine importer (TC 3.A.1.24) family. The complex is composed of two ATP-binding proteins (MetN), two transmembrane proteins (MetI) and a solute-binding protein (MetQ).

The protein resides in the cell inner membrane. The enzyme catalyses L-methionine(out) + ATP + H2O = L-methionine(in) + ADP + phosphate + H(+). It catalyses the reaction D-methionine(out) + ATP + H2O = D-methionine(in) + ADP + phosphate + H(+). In terms of biological role, part of the ABC transporter complex MetNIQ involved in methionine import. Responsible for energy coupling to the transport system. The protein is Methionine import ATP-binding protein MetN of Histophilus somni (strain 129Pt) (Haemophilus somnus).